The primary structure comprises 489 residues: Putative (R)-citramalate synthase CimA (489 aa).

The 253-residue stretch at 3-255 folds into the Pyruvate carboxyltransferase domain; that stretch reads VKILDTTLRD…KTKIKKERLY (253 aa).

It belongs to the alpha-IPM synthase/homocitrate synthase family. As to quaternary structure, homodimer.

The catalysed reaction is pyruvate + acetyl-CoA + H2O = (3R)-citramalate + CoA + H(+). The protein operates within amino-acid biosynthesis; L-isoleucine biosynthesis; 2-oxobutanoate from pyruvate: step 1/3. Its function is as follows. Catalyzes the condensation of pyruvate and acetyl-coenzyme A to form (R)-citramalate. This is Putative (R)-citramalate synthase CimA (cimA) from Archaeoglobus fulgidus (strain ATCC 49558 / DSM 4304 / JCM 9628 / NBRC 100126 / VC-16).